We begin with the raw amino-acid sequence, 255 residues long: BTB/POZ domain-containing protein kctd15 (255 aa).

In terms of domain architecture, BTB spans 30 to 100 (APVHIDVGGH…LRTSKLLLPE (71 aa)).

As to quaternary structure, forms oligomers, predominantly homopentamers. Interacts with TFAP2A; this interaction inhibits TFAP2A transcriptional activation.

The protein resides in the nucleus. Functionally, during embryonic development, interferes with neural crest formation. Inhibits AP2 transcriptional activity by interaction with its activation domain. The chain is BTB/POZ domain-containing protein kctd15 (kctd15) from Xenopus tropicalis (Western clawed frog).